Here is a 197-residue protein sequence, read N- to C-terminus: Outer membrane protein 26 (197 aa).

A signal peptide spans 1–23; the sequence is MKNIAKVTALALGIALASGYASA.

It belongs to the Skp family.

It is found in the cell outer membrane. This chain is Outer membrane protein 26 (omp26), found in Haemophilus influenzae (strain ATCC 51907 / DSM 11121 / KW20 / Rd).